The chain runs to 202 residues: Riboflavin synthase (202 aa).

Lumazine-binding repeat units follow at residues 1–101 (MFTG…MGGH) and 102–198 (LVFG…ARLA). 2,4-dihydroxypteridine is bound by residues 4–6 (GII), 47–49 (CLT), 66–68 (EAW), 105–107 (GHV), lysine 140, 149–151 (SLT), and 163–168 (LLIRHS).

In terms of assembly, homotrimer.

The catalysed reaction is 2 6,7-dimethyl-8-(1-D-ribityl)lumazine + H(+) = 5-amino-6-(D-ribitylamino)uracil + riboflavin. It participates in cofactor biosynthesis; riboflavin biosynthesis; riboflavin from 2-hydroxy-3-oxobutyl phosphate and 5-amino-6-(D-ribitylamino)uracil: step 2/2. Is inhibited by riboflavin. Product inhibition may be the major mechanism by which RS regulates its enzymatic activity in vivo. In terms of biological role, catalyzes the dismutation of two molecules of 6,7-dimethyl-8-ribityllumazine, resulting in the formation of riboflavin and 5-amino-6-(D-ribitylamino)uracil. In Brucella abortus (strain 2308), this protein is Riboflavin synthase.